Here is a 502-residue protein sequence, read N- to C-terminus: Type II secretion system protein E (502 aa).

263–270 (GPTGSGKT) contacts ATP. The Zn(2+) site is built by C396, C399, C429, and C432. The tract at residues 461–480 (SSEQEMTRHARTSGPSIRDD) is disordered.

This sequence belongs to the GSP E family. In terms of assembly, homodimer. Dimerization is directed by a relatively short domain near the extreme N-terminus and is essential for extracellular protein secretion. May form homooligomers. Interacts with XcpY/GspL. Forms an inner membrane platform subcomplex with XcpS/GspF, XcpY/GspL and XcpZ/GspM. Zn(2+) serves as cofactor.

It localises to the cell inner membrane. The catalysed reaction is ATP + H2O + cellular proteinSide 1 = ADP + phosphate + cellular proteinSide 2.. Its function is as follows. ATPase component of the type II secretion system required for the energy-dependent secretion of extracellular factors such as proteases and toxins from the periplasm. Acts as a molecular motor to provide the energy that is required for assembly of the pseudopilus and the extrusion of substrates generated in the cytoplasm. The chain is Type II secretion system protein E (xcpR) from Pseudomonas aeruginosa (strain ATCC 15692 / DSM 22644 / CIP 104116 / JCM 14847 / LMG 12228 / 1C / PRS 101 / PAO1).